The primary structure comprises 307 residues: Upstream stimulatory factor 1 (307 aa).

Disordered regions lie at residues 104-131 (DDNG…SVGG) and 168-207 (QGGS…VERR). Residues 122-131 (PTDSSTSVGG) show a composition bias toward low complexity. A compositionally biased stretch (basic and acidic residues) spans 187-207 (DGPRTTRDDKRRAQHNEVERR). One can recognise a bHLH domain in the interval 196–251 (KRRAQHNEVERRRRDKINNWIVQLSKIIPDCSMESTKTGQSKGGILSKACDYIQEL). Residues 268–289 (LQMDNEVLRQQVEDLKNNNLTL) form a leucine-zipper region.

Efficient DNA binding requires dimerization with another bHLH protein. Binds DNA as a homodimer or a heterodimer. Oocyte and somatic tissue. Oocytic and somatic forms of this protein exist, probably as a result of post-translational modifications or minor splicing differences.

It is found in the nucleus. Its function is as follows. May act as a regulator of transcription factor IIIA (TFIIIA) gene expression. The protein is Upstream stimulatory factor 1 (usf1) of Xenopus borealis (Kenyan clawed frog).